A 215-amino-acid chain; its full sequence is Cytochrome b6 (215 aa).

Residues 32–52 traverse the membrane as a helical segment; it reads IFYCLGGITLTCFLVQVATGF. A heme c-binding site is contributed by cysteine 35. Residues histidine 86 and histidine 100 each coordinate heme b. Helical transmembrane passes span 90-110, 116-136, and 186-206; these read ASMMVLMMILHVFRVYLTGGF, LTWVTGVVLAVLTASFGVTGY, and LHTFVLPLLTAVFMLMHFPMI. Heme b is bound by residues histidine 187 and histidine 202.

The protein belongs to the cytochrome b family. PetB subfamily. The 4 large subunits of the cytochrome b6-f complex are cytochrome b6, subunit IV (17 kDa polypeptide, PetD), cytochrome f and the Rieske protein, while the 4 small subunits are PetG, PetL, PetM and PetN. The complex functions as a dimer. Heme b serves as cofactor. It depends on heme c as a cofactor.

Its subcellular location is the plastid. The protein resides in the chloroplast thylakoid membrane. Component of the cytochrome b6-f complex, which mediates electron transfer between photosystem II (PSII) and photosystem I (PSI), cyclic electron flow around PSI, and state transitions. The protein is Cytochrome b6 of Saccharum hybrid (Sugarcane).